We begin with the raw amino-acid sequence, 890 residues long: Tyrosine-protein kinase receptor TYRO3 (890 aa).

The N-terminal stretch at 1–40 (MALRRSMGRPGLPPLPLPPPPRLGLLLAALASLLLPESAA) is a signal peptide. 2 Ig-like C2-type domains span residues 41 to 128 (AGLK…TEIS) and 139 to 220 (PFFT…ATVH). At 41–429 (AGLKLMGAPV…QGPPHSRTSW (389 aa)) the chain is on the extracellular side. Asn-63 is a glycosylation site (N-linked (GlcNAc...) asparagine). 2 disulfide bridges follow: Cys-64–Cys-117 and Cys-160–Cys-203. 6 N-linked (GlcNAc...) asparagine glycosylation sites follow: Asn-191, Asn-230, Asn-240, Asn-293, Asn-366, and Asn-380. 2 consecutive Fibronectin type-III domains span residues 227–320 (APFN…TKGL) and 325–416 (APQN…SHDR). The helical transmembrane segment at 430-450 (VPVVLGVLTALVTAAALALIL) threads the bilayer. The Cytoplasmic segment spans residues 451 to 890 (LRKRRKETRF…QQGLLPHSSC (440 aa)). Residue Ser-466 is modified to Phosphoserine. The region spanning 518–790 (FTLGRMLGKG…CLRMELENIL (273 aa)) is the Protein kinase domain. ATP is bound by residues 524–532 (LGKGEFGSV) and Lys-550. The active-site Proton acceptor is Asp-655. Phosphotyrosine; by autocatalysis occurs at positions 681, 685, 686, and 804. 2 disordered regions span residues 815 to 837 (AGGS…GSGM) and 851 to 871 (LTPG…ESPL). Ser-818 and Ser-869 each carry phosphoserine.

Belongs to the protein kinase superfamily. Tyr protein kinase family. AXL/UFO subfamily. As to quaternary structure, monomer and homodimer. Interacts (via N-terminus) with extracellular ligands TULP1 and GAS6. Interacts with PIK3R1; this interaction increases PI3-kinase activity. In terms of processing, autophosphorylated. In terms of tissue distribution, abundant in the brain and lower levels in other tissues.

Its subcellular location is the cell membrane. The catalysed reaction is L-tyrosyl-[protein] + ATP = O-phospho-L-tyrosyl-[protein] + ADP + H(+). In terms of biological role, receptor tyrosine kinase that transduces signals from the extracellular matrix into the cytoplasm by binding to several ligands including TULP1 or GAS6. Regulates many physiological processes including cell survival, migration and differentiation. Ligand binding at the cell surface induces dimerization and autophosphorylation of TYRO3 on its intracellular domain that provides docking sites for downstream signaling molecules. Following activation by ligand, interacts with PIK3R1 and thereby enhances PI3-kinase activity. Activates the AKT survival pathway, including nuclear translocation of NF-kappa-B and up-regulation of transcription of NF-kappa-B-regulated genes. TYRO3 signaling plays a role in various processes such as neuron protection from excitotoxic injury, platelet aggregation and cytoskeleton reorganization. Also plays an important role in inhibition of Toll-like receptors (TLRs)-mediated innate immune response by activating STAT1, which selectively induces production of suppressors of cytokine signaling SOCS1 and SOCS3. Its function is as follows. (Microbial infection) Acts as a receptor for lassa virus and lymphocytic choriomeningitis virus, possibly through GAS6 binding to phosphatidyl-serine at the surface of virion envelope. (Microbial infection) Acts as a receptor for Ebolavirus, possibly through GAS6 binding to phosphatidyl-serine at the surface of virion envelope. In Homo sapiens (Human), this protein is Tyrosine-protein kinase receptor TYRO3 (TYRO3).